The following is a 457-amino-acid chain: tRNA modification GTPase MnmE (457 aa).

Positions 24, 81, and 121 each coordinate (6S)-5-formyl-5,6,7,8-tetrahydrofolate. The region spanning 218 to 380 (GIKIVITGKP…LLKYLTKIIS (163 aa)) is the TrmE-type G domain. N228 serves as a coordination point for K(+). GTP-binding positions include 228 to 233 (NVGKSS), 247 to 253 (TNIAGTT), 272 to 275 (DTAG), and 338 to 341 (NKAD). Mg(2+) is bound at residue S232. 3 residues coordinate K(+): T247, I249, and T252. T253 provides a ligand contact to Mg(2+). K457 is a binding site for (6S)-5-formyl-5,6,7,8-tetrahydrofolate.

The protein belongs to the TRAFAC class TrmE-Era-EngA-EngB-Septin-like GTPase superfamily. TrmE GTPase family. Homodimer. Heterotetramer of two MnmE and two MnmG subunits. The cofactor is K(+).

The protein localises to the cytoplasm. Functionally, exhibits a very high intrinsic GTPase hydrolysis rate. Involved in the addition of a carboxymethylaminomethyl (cmnm) group at the wobble position (U34) of certain tRNAs, forming tRNA-cmnm(5)s(2)U34. This chain is tRNA modification GTPase MnmE, found in Baumannia cicadellinicola subsp. Homalodisca coagulata.